The following is a 269-amino-acid chain: Shikimate dehydrogenase (NADP(+)) (269 aa).

Residues 17–19 (SKS) and threonine 64 each bind shikimate. Lysine 68 serves as the catalytic Proton acceptor. Aspartate 80 is a binding site for NADP(+). 2 residues coordinate shikimate: asparagine 89 and aspartate 105. NADP(+)-binding positions include 130–134 (GAGGA), 154–159 (NRTRAK), and methionine 213. Tyrosine 215 is a shikimate binding site. An NADP(+)-binding site is contributed by glycine 237.

It belongs to the shikimate dehydrogenase family. In terms of assembly, homodimer.

The enzyme catalyses shikimate + NADP(+) = 3-dehydroshikimate + NADPH + H(+). Its pathway is metabolic intermediate biosynthesis; chorismate biosynthesis; chorismate from D-erythrose 4-phosphate and phosphoenolpyruvate: step 4/7. In terms of biological role, involved in the biosynthesis of the chorismate, which leads to the biosynthesis of aromatic amino acids. Catalyzes the reversible NADPH linked reduction of 3-dehydroshikimate (DHSA) to yield shikimate (SA). This Neisseria meningitidis serogroup C (strain 053442) protein is Shikimate dehydrogenase (NADP(+)).